Here is a 235-residue protein sequence, read N- to C-terminus: Putative cobalt transport protein CbiM 2 (235 aa).

Transmembrane regions (helical) follow at residues 8–28 (LPAIWCIVWFVVSIPVVAYGV), 40–60 (GILPVLAVAGAFIFVLSSLKM), 74–94 (GIGAIIFGPAITAVLSTIVLI), 107–127 (TLGANVFSMGIVGPIVAYLIY), 135–155 (LNFYLIVFLAATLGDWATYIV), 160–180 (LALAFPAGDILTFGGFFSSFS), and 185–205 (IFAITQVPLAIVEGAVSALLF).

Belongs to the CbiM family. As to quaternary structure, forms an energy-coupling factor (ECF) transporter complex composed of an ATP-binding protein (A component, CbiO), a transmembrane protein (T component, CbiQ) and 2 possible substrate-capture proteins (S components, CbiM and CbiN) of unknown stoichimetry.

Its subcellular location is the cell membrane. It functions in the pathway cofactor biosynthesis; adenosylcobalamin biosynthesis. In terms of biological role, part of the energy-coupling factor (ECF) transporter complex CbiMNOQ involved in cobalt import. In Methanosarcina barkeri (strain Fusaro / DSM 804), this protein is Putative cobalt transport protein CbiM 2.